The sequence spans 278 residues: MKVDDDLVRQVIRPRLRGSHKGSYGRVLLVGGLYPYGGAIIMAAIACVNSGAGLVTVATDRENIIALHAHLPEAMAFDLRETERFLDKLRAADVILIGSGLGEEETADWALELVLANIRSNQNLVVDGSALNLLAKKNQSSLPKCHLILTPHQKEWERLSGLAISEQSVSNTQRALEEFQSGTILVAKSHKTAVYQGAEVTHLEVGGPYQATGGMGDTLAGMVAGFLAQFASTDSYKAVIVATWLHSAIADNIAENAYVVLPTRISKAIPSWMKKLSL.

Residues 4–276 (DDDLVRQVIR…KAIPSWMKKL (273 aa)) enclose the YjeF C-terminal domain. Residues alanine 39, glycine 102, and histidine 152 each contribute to the (6S)-NADPHX site. Residue glycine 216 coordinates AMP. Aspartate 217 contributes to the (6S)-NADPHX binding site.

It belongs to the NnrD/CARKD family. In terms of assembly, homotetramer. Mg(2+) is required as a cofactor.

The catalysed reaction is (6S)-NADHX + ADP = AMP + phosphate + NADH + H(+). It carries out the reaction (6S)-NADPHX + ADP = AMP + phosphate + NADPH + H(+). Its function is as follows. Catalyzes the dehydration of the S-form of NAD(P)HX at the expense of ADP, which is converted to AMP. Together with NAD(P)HX epimerase, which catalyzes the epimerization of the S- and R-forms, the enzyme allows the repair of both epimers of NAD(P)HX, a damaged form of NAD(P)H that is a result of enzymatic or heat-dependent hydration. The polypeptide is ADP-dependent (S)-NAD(P)H-hydrate dehydratase (Streptococcus thermophilus).